The following is a 103-amino-acid chain: Protein RALF-like 18 (103 aa).

The first 32 residues, 1–32 (MMNNMKLLIIAVMIISAALLPALVVGSRPVKC), serve as a signal peptide directing secretion. Positions 33–58 (DNCMDGGEKEEIMKMSSGVDVSHRIL) are cleaved as a propeptide — removed in mature form. The cysteines at positions 92 and 98 are disulfide-linked.

The protein belongs to the plant rapid alkalinization factor (RALF) family. Post-translationally, proteolytically cleaved, probably by S1P, a subtilisin-like serine protease (subtilase).

It localises to the secreted. Functionally, cell signaling peptide that may regulate plant stress, growth, and development. Mediates a rapid alkalinization of extracellular space by mediating a transient increase in the cytoplasmic Ca(2+) concentration leading to a calcium-dependent signaling events through a cell surface receptor and a concomitant activation of some intracellular mitogen-activated protein kinases. This is Protein RALF-like 18 (RALFL18) from Arabidopsis thaliana (Mouse-ear cress).